A 205-amino-acid polypeptide reads, in one-letter code: NADH-quinone oxidoreductase subunit C (205 aa).

This sequence belongs to the complex I 30 kDa subunit family. In terms of assembly, NDH-1 is composed of 14 different subunits. Subunits NuoB, C, D, E, F, and G constitute the peripheral sector of the complex.

It localises to the cell inner membrane. The catalysed reaction is a quinone + NADH + 5 H(+)(in) = a quinol + NAD(+) + 4 H(+)(out). Functionally, NDH-1 shuttles electrons from NADH, via FMN and iron-sulfur (Fe-S) centers, to quinones in the respiratory chain. The immediate electron acceptor for the enzyme in this species is believed to be ubiquinone. Couples the redox reaction to proton translocation (for every two electrons transferred, four hydrogen ions are translocated across the cytoplasmic membrane), and thus conserves the redox energy in a proton gradient. This is NADH-quinone oxidoreductase subunit C from Nitrosospira multiformis (strain ATCC 25196 / NCIMB 11849 / C 71).